Here is a 647-residue protein sequence, read N- to C-terminus: MLVVFTMKKAHSPLFPIFTFVLINLIILSLSRLGLAVWQSERVSAVDGWLQLFLQGVRMDVVALCYLFGVPALLTTLFHSSKVWVKILRLWLTFGSVFIIFMEIATPAFIETYDYRPNRLFIEYLIYPKEVFSMLAEGHLSAVIFSLVFTILAAVIYWKISGWAVKNLRSMSWKLRPVIALLVIVVSFLGARSSFQHRGINPAMVAFSSDALVNSLVLNSGYSVIYAAQQFKDEEKSSEMYGKMDADEMFRIVKASRGRPESDYISDKYPTLTKNVATYQGKPKNIVILLQESLGAQFIGTLGGKPLSPNVDQLAKEGWLFENLYATGTRSVRGIEATTAGFTPTPARAVVKLNNAQSGFFTIADLLHKQGYNTSFIYGGEKHFDNMASFFYGNGFKDIWDQQDYQNPKFTGTWGVSDEDLFDKANETFTKLQNEGKPFFSLVFSSSNHDPFEYPDGKIELYEQPKATRNNAAKYADYALGHFFKMAKQSNYWKDTIFLIIADHDSRVGGASLVPIKHFHIPALILGDGITPRRDSRLVSQIDMPTTLLSLAGVSGNYPMIGFDLTQDVNPDRAFMQYDQTQAMMKGNNDVVIQMPNKAAQGYHYDKSTETLTPKDVPDAMKKEALAHALLGSYLYKNRLYSSGENK.

A run of 5 helical transmembrane segments spans residues 14–38 (LFPI…LAVW), 61–78 (VVAL…TTLF), 90–110 (LWLT…PAFI), 140–158 (LSAV…VIYW), and 178–195 (VIAL…RSSF).

The protein localises to the cell membrane. This is an uncharacterized protein from Haemophilus influenzae (strain ATCC 51907 / DSM 11121 / KW20 / Rd).